Reading from the N-terminus, the 307-residue chain is Trehalose transport system permease protein SugA (307 aa).

The next 6 membrane-spanning stretches (helical) occupy residues 25 to 45 (LAFM…AYPI), 89 to 109 (LAIT…LALV), 123 to 143 (AVLI…YYAW), 168 to 188 (LGIV…LLLL), 217 to 237 (ILPM…LDAF), and 272 to 292 (LGSA…FIFI). The region spanning 85–291 (LAVTLAITAV…GCVAVIAFIF (207 aa)) is the ABC transmembrane type-1 domain.

This sequence belongs to the binding-protein-dependent transport system permease family. As to quaternary structure, the complex is composed of two ATP-binding proteins (SugC), two transmembrane proteins (Suga and SugB) and a solute-binding protein (LpqY).

It is found in the cell inner membrane. In terms of biological role, part of the ABC transporter complex LpqY-SugA-SugB-SugC, which is highly specific for uptake of trehalose. Involved in the recycling of extracellular trehalose released from trehalose-containing molecules synthesized by M.tuberculosis. Trehalose uptake is essential for virulence. Probably responsible for the translocation of the substrate across the membrane. The sequence is that of Trehalose transport system permease protein SugA (sugA) from Mycobacterium tuberculosis (strain CDC 1551 / Oshkosh).